The primary structure comprises 240 residues: MAAPFALVSRVSPAARLPIRAAWRRARPTVGLPSSGRARQLAVASAAQENRDNTAVDVHVNQDGGNQQGNAVQRRPRRSSALDGISPFGLVDPMSPMRTMRQMLDTMDRIFDDVALGFPATPRRSLATGEVRMPWDVMEDDKEVRMRFDMPGLSREEVKVMVEDDALVIRGEHKKEEGEGAEGSGDGWWKERSVSSYDMRLALPDECDKSKVRAELKNGVLLVTVPKTEVERKVIDVQVQ.

The N-terminal 43 residues, 1–43 (MAAPFALVSRVSPAARLPIRAAWRRARPTVGLPSSGRARQLAV), are a transit peptide targeting the chloroplast. The disordered stretch occupies residues 59–84 (HVNQDGGNQQGNAVQRRPRRSSALDG). Residues 126 to 240 (LATGEVRMPW…ERKVIDVQVQ (115 aa)) enclose the sHSP domain.

It belongs to the small heat shock protein (HSP20) family. In terms of assembly, may form oligomeric structures. Expressed in roots, stems, leaves, spikelets and embryos.

The protein resides in the plastid. It is found in the chloroplast. In Oryza sativa subsp. japonica (Rice), this protein is 26.7 kDa heat shock protein, chloroplastic (HSP26.7).